A 79-amino-acid polypeptide reads, in one-letter code: UPF0180 protein BCB4264_A1446 (79 aa).

Belongs to the UPF0180 family.

The sequence is that of UPF0180 protein BCB4264_A1446 from Bacillus cereus (strain B4264).